The primary structure comprises 423 residues: Diaminobutyrate--2-oxoglutarate transaminase (423 aa).

K267 carries the post-translational modification N6-(pyridoxal phosphate)lysine.

This sequence belongs to the class-III pyridoxal-phosphate-dependent aminotransferase family. Homohexamer. Requires pyridoxal 5'-phosphate as cofactor.

The catalysed reaction is L-2,4-diaminobutanoate + 2-oxoglutarate = L-aspartate 4-semialdehyde + L-glutamate. It participates in amine and polyamine biosynthesis; ectoine biosynthesis; L-ectoine from L-aspartate 4-semialdehyde: step 1/3. Functionally, catalyzes reversively the conversion of L-aspartate beta-semialdehyde (ASA) to L-2,4-diaminobutyrate (DABA) by transamination with L-glutamate. This chain is Diaminobutyrate--2-oxoglutarate transaminase (ectB), found in Chromohalobacter salexigens (strain ATCC BAA-138 / DSM 3043 / CIP 106854 / NCIMB 13768 / 1H11).